We begin with the raw amino-acid sequence, 226 residues long: Urease accessory protein UreF (226 aa).

Belongs to the UreF family. UreD, UreF and UreG form a complex that acts as a GTP-hydrolysis-dependent molecular chaperone, activating the urease apoprotein by helping to assemble the nickel containing metallocenter of UreC. The UreE protein probably delivers the nickel.

It is found in the cytoplasm. Required for maturation of urease via the functional incorporation of the urease nickel metallocenter. The protein is Urease accessory protein UreF of Burkholderia ambifaria (strain MC40-6).